The chain runs to 155 residues: Nascent polypeptide-associated complex subunit beta (155 aa).

2 disordered regions span residues M1 to K39 and Q122 to E155. Basic residues predominate over residues T21–K31. An NAC-A/B domain is found at G34–V99. The segment covering Q125–G135 has biased composition (basic and acidic residues).

The protein belongs to the NAC-beta family. In terms of assembly, part of the nascent polypeptide-associated complex (NAC), consisting of EGD2 and EGD1. NAC associates with ribosomes via EGD1.

The protein localises to the cytoplasm. The protein resides in the nucleus. In terms of biological role, component of the nascent polypeptide-associated complex (NAC), a dynamic component of the ribosomal exit tunnel, protecting the emerging polypeptides from interaction with other cytoplasmic proteins to ensure appropriate nascent protein targeting. The NAC complex also promotes mitochondrial protein import by enhancing productive ribosome interactions with the outer mitochondrial membrane and blocks the inappropriate interaction of ribosomes translating non-secretory nascent polypeptides with translocation sites in the membrane of the endoplasmic reticulum. EGD1 may act as a transcription factor that exert a negative effect on the expression of several genes that are transcribed by RNA polymerase II. The polypeptide is Nascent polypeptide-associated complex subunit beta (EGD1) (Coccidioides immitis (strain RS) (Valley fever fungus)).